The following is a 243-amino-acid chain: Pyridoxine 5'-phosphate synthase (243 aa).

Asn9 provides a ligand contact to 3-amino-2-oxopropyl phosphate. Residue 11 to 12 coordinates 1-deoxy-D-xylulose 5-phosphate; the sequence is DH. Arg20 contacts 3-amino-2-oxopropyl phosphate. The active-site Proton acceptor is the His45. 2 residues coordinate 1-deoxy-D-xylulose 5-phosphate: Arg47 and His52. The active-site Proton acceptor is the Glu72. Thr102 is a 1-deoxy-D-xylulose 5-phosphate binding site. His193 serves as the catalytic Proton donor. Residues Gly194 and 215–216 each bind 3-amino-2-oxopropyl phosphate; that span reads GH.

It belongs to the PNP synthase family. As to quaternary structure, homooctamer; tetramer of dimers.

It localises to the cytoplasm. The enzyme catalyses 3-amino-2-oxopropyl phosphate + 1-deoxy-D-xylulose 5-phosphate = pyridoxine 5'-phosphate + phosphate + 2 H2O + H(+). The protein operates within cofactor biosynthesis; pyridoxine 5'-phosphate biosynthesis; pyridoxine 5'-phosphate from D-erythrose 4-phosphate: step 5/5. Catalyzes the complicated ring closure reaction between the two acyclic compounds 1-deoxy-D-xylulose-5-phosphate (DXP) and 3-amino-2-oxopropyl phosphate (1-amino-acetone-3-phosphate or AAP) to form pyridoxine 5'-phosphate (PNP) and inorganic phosphate. This is Pyridoxine 5'-phosphate synthase from Vibrio parahaemolyticus serotype O3:K6 (strain RIMD 2210633).